The chain runs to 182 residues: ATP synthase subunit delta (182 aa).

This sequence belongs to the ATPase delta chain family. In terms of assembly, F-type ATPases have 2 components, F(1) - the catalytic core - and F(0) - the membrane proton channel. F(1) has five subunits: alpha(3), beta(3), gamma(1), delta(1), epsilon(1). F(0) has three main subunits: a(1), b(2) and c(10-14). The alpha and beta chains form an alternating ring which encloses part of the gamma chain. F(1) is attached to F(0) by a central stalk formed by the gamma and epsilon chains, while a peripheral stalk is formed by the delta and b chains.

The protein resides in the cell inner membrane. F(1)F(0) ATP synthase produces ATP from ADP in the presence of a proton or sodium gradient. F-type ATPases consist of two structural domains, F(1) containing the extramembraneous catalytic core and F(0) containing the membrane proton channel, linked together by a central stalk and a peripheral stalk. During catalysis, ATP synthesis in the catalytic domain of F(1) is coupled via a rotary mechanism of the central stalk subunits to proton translocation. In terms of biological role, this protein is part of the stalk that links CF(0) to CF(1). It either transmits conformational changes from CF(0) to CF(1) or is implicated in proton conduction. In Sulfurihydrogenibium sp. (strain YO3AOP1), this protein is ATP synthase subunit delta.